Reading from the N-terminus, the 608-residue chain is Chaperone protein HtpG (608 aa).

The tract at residues 1-332 (MQFQTEVNQL…VEDLPLNVSR (332 aa)) is a; substrate-binding. The tract at residues 333–536 (EILQENQILK…KNKPDFAMQQ (204 aa)) is b. Residues 537–608 (LLKQMGQEQN…LTKIINKAFS (72 aa)) are c.

This sequence belongs to the heat shock protein 90 family. As to quaternary structure, homodimer.

The protein localises to the cytoplasm. Molecular chaperone. Has ATPase activity. The chain is Chaperone protein HtpG from Campylobacter jejuni subsp. jejuni serotype O:23/36 (strain 81-176).